A 266-amino-acid chain; its full sequence is Hydroxyethylthiazole kinase (266 aa).

Residue methionine 43 coordinates substrate. 2 residues coordinate ATP: arginine 119 and threonine 166. Glycine 193 provides a ligand contact to substrate.

It belongs to the Thz kinase family. Mg(2+) is required as a cofactor.

The catalysed reaction is 5-(2-hydroxyethyl)-4-methylthiazole + ATP = 4-methyl-5-(2-phosphooxyethyl)-thiazole + ADP + H(+). The protein operates within cofactor biosynthesis; thiamine diphosphate biosynthesis; 4-methyl-5-(2-phosphoethyl)-thiazole from 5-(2-hydroxyethyl)-4-methylthiazole: step 1/1. Catalyzes the phosphorylation of the hydroxyl group of 4-methyl-5-beta-hydroxyethylthiazole (THZ). The protein is Hydroxyethylthiazole kinase of Methanococcus vannielii (strain ATCC 35089 / DSM 1224 / JCM 13029 / OCM 148 / SB).